A 368-amino-acid chain; its full sequence is MKINGISYRSLWRPSDDASSIRIFDQTRFPWNVEILELRDVGAVADAITSMQVRGAPLIGAVAAYGLVFALQDDASDEALEKAAAFLVATRPTAINLRWAIERMVARLKAVRPTERVAAGYVEADAICDEDVQVNEAIGRHGLELIREIWERKGKQGQVNLLTHCNAGWIATVDWGTALAPIYMAHDEGIPVHVWVDETRPRNQGSLLTAWELGSHGVPHTVIADNAGGHYMQTGRVDMVIVGTDRVTAQGDVANKIGTYLKALAAHDNNVPFWVALPSSTIDWRVRDGVKDIPIEERSADEVLFMTGLDSNGEAGRVRIAPLNSPAANPAFDVTPARLVTGLITERGRCDASEAGLQSLFPEQTKAH.

Substrate contacts are provided by residues 54-56, arginine 91, and glutamine 204; that span reads RGA. Catalysis depends on aspartate 245, which acts as the Proton donor. A substrate-binding site is contributed by 255–256; that stretch reads NK.

It belongs to the eIF-2B alpha/beta/delta subunits family. MtnA subfamily.

It carries out the reaction 5-(methylsulfanyl)-alpha-D-ribose 1-phosphate = 5-(methylsulfanyl)-D-ribulose 1-phosphate. It participates in amino-acid biosynthesis; L-methionine biosynthesis via salvage pathway; L-methionine from S-methyl-5-thio-alpha-D-ribose 1-phosphate: step 1/6. Functionally, catalyzes the interconversion of methylthioribose-1-phosphate (MTR-1-P) into methylthioribulose-1-phosphate (MTRu-1-P). This chain is Methylthioribose-1-phosphate isomerase, found in Gluconobacter oxydans (strain 621H) (Gluconobacter suboxydans).